The following is a 522-amino-acid chain: Putative cysteine ligase BshC (522 aa).

A coiled-coil region spans residues 436 to 469 (SWAQAEKAKALKQLEDIEKKLRKAEERKHDDVIK).

It belongs to the BshC family.

This Cytophaga hutchinsonii (strain ATCC 33406 / DSM 1761 / CIP 103989 / NBRC 15051 / NCIMB 9469 / D465) protein is Putative cysteine ligase BshC.